A 148-amino-acid polypeptide reads, in one-letter code: Cathelicidin-1 (148 aa).

The first 17 residues, 1-17 (MLSCWVLLLALLGGACA), serve as a signal peptide directing secretion. The propeptide occupies 18–122 (LPAPLGYSQA…TCVDSMADPV (105 aa)). 2 disulfide bridges follow: cysteine 75-cysteine 86 and cysteine 97-cysteine 114.

This sequence belongs to the cathelicidin family. In terms of tissue distribution, detected in gizzard, liver, small intestine, large intestine, cloaca, bursa of Fabricius, gall bladder, lung, trachea, kidney, testis and bone marrow.

The protein localises to the secreted. In terms of biological role, binds bacterial lipopolysaccharide (LPS). Has potent antimicrobial activity against Gram-positive and Gram-negative bacteria (in vitro). Has hemolytic activity (in vitro). May play a role in the innate immune response. The sequence is that of Cathelicidin-1 (CATHL1) from Gallus gallus (Chicken).